A 76-amino-acid polypeptide reads, in one-letter code: MRTFALLTAMLLLVALQPQAEARQARADEAAAQQQPGADDQGMAHSFTRPENAALPLSESAKGLRCVCRRGVCQLL.

Residues 1–22 form the signal peptide; the sequence is MRTFALLTAMLLLVALQPQAEA. Positions 23–64 are excised as a propeptide; the sequence is RQARADEAAAQQQPGADDQGMAHSFTRPENAALPLSESAKGL. Positions 24-54 are disordered; that stretch reads QARADEAAAQQQPGADDQGMAHSFTRPENAA. The span at 30–44 shows a compositional bias: low complexity; the sequence is AAAQQQPGADDQGMA. A Cyclopeptide (Arg-Cys) (interchain with C-73 in subunit A); in form BTD-1 cross-link involves residue Arg-65. A Cyclopeptide (Arg-Cys) (interchain with C-73 in subunit B); in form BTD-2 cross-link involves residue Arg-65. An intrachain disulfide couples Cys-68 to Cys-73. Cys-73 participates in a covalent cross-link: Cyclopeptide (Cys-Arg) (interchain with R-65 in subunit A); in form BTD-1. A Cyclopeptide (Cys-Arg) (interchain with R-65 in subunit B); in form BTD-2 cross-link involves residue Cys-73. Positions 74–76 are excised as a propeptide; sequence QLL.

Belongs to the alpha-defensin family. Theta subfamily. As to quaternary structure, BTD-1 is a cyclic heterodimer composed of subunits A and B; disulfide-linked. BTD-2 is a cyclic homodimer composed of two subunits B; disulfide-linked. In terms of processing, forms a cyclic peptide with subunit A (BTD-1), or subunit B (BTD-2). An additional intersubunit disulfide bond is formed.

In terms of biological role, BTD-1 and BTD-2 have antimicrobial activity against the Gram-negative bacterium E.coli ML35, the Gram-positive bacterium S.aureus 502a, and the fungus C.albicans 16820. BTD-2 is more effective against E.coli than BTD-1. The chain is Theta defensin subunit B (BTDB) from Papio anubis (Olive baboon).